The primary structure comprises 312 residues: Ribonuclease Z (312 aa).

Residues H62, H64, D66, H67, H144, D215, and H273 each contribute to the Zn(2+) site. Residue D66 is the Proton acceptor of the active site.

Belongs to the RNase Z family. As to quaternary structure, homodimer. The cofactor is Zn(2+).

The catalysed reaction is Endonucleolytic cleavage of RNA, removing extra 3' nucleotides from tRNA precursor, generating 3' termini of tRNAs. A 3'-hydroxy group is left at the tRNA terminus and a 5'-phosphoryl group is left at the trailer molecule.. Its function is as follows. Zinc phosphodiesterase, which displays some tRNA 3'-processing endonuclease activity. Probably involved in tRNA maturation, by removing a 3'-trailer from precursor tRNA. The polypeptide is Ribonuclease Z (Prochlorococcus marinus (strain AS9601)).